A 149-amino-acid chain; its full sequence is D-aminoacyl-tRNA deacylase (149 aa).

The Gly-cisPro motif, important for rejection of L-amino acids motif lies at 137 to 138; it reads GP.

It belongs to the DTD family. As to quaternary structure, homodimer.

Its subcellular location is the cytoplasm. The catalysed reaction is glycyl-tRNA(Ala) + H2O = tRNA(Ala) + glycine + H(+). It carries out the reaction a D-aminoacyl-tRNA + H2O = a tRNA + a D-alpha-amino acid + H(+). Its function is as follows. An aminoacyl-tRNA editing enzyme that deacylates mischarged D-aminoacyl-tRNAs. Also deacylates mischarged glycyl-tRNA(Ala), protecting cells against glycine mischarging by AlaRS. Acts via tRNA-based rather than protein-based catalysis; rejects L-amino acids rather than detecting D-amino acids in the active site. By recycling D-aminoacyl-tRNA to D-amino acids and free tRNA molecules, this enzyme counteracts the toxicity associated with the formation of D-aminoacyl-tRNA entities in vivo and helps enforce protein L-homochirality. The protein is D-aminoacyl-tRNA deacylase of Janthinobacterium sp. (strain Marseille) (Minibacterium massiliensis).